The chain runs to 122 residues: Large ribosomal subunit protein uL29A (122 aa).

A coiled-coil region spans residues 10 to 69 (QLGIKQIEERAAEIKADLAALRQKKNSGDVGANDIKTAKKNLARALTVRREKILEELVEA).

It belongs to the universal ribosomal protein uL29 family. In terms of assembly, component of the large ribosomal subunit.

It is found in the cytoplasm. This is Large ribosomal subunit protein uL29A (RPL35A) from Encephalitozoon cuniculi (strain GB-M1) (Microsporidian parasite).